Here is a 203-residue protein sequence, read N- to C-terminus: Outer-membrane lipoprotein carrier protein (203 aa).

Residues 1–21 form the signal peptide; the sequence is MKKWLAISCLIAGVTSTAVYA.

This sequence belongs to the LolA family. Monomer.

It localises to the periplasm. In terms of biological role, participates in the translocation of lipoproteins from the inner membrane to the outer membrane. Only forms a complex with a lipoprotein if the residue after the N-terminal Cys is not an aspartate (The Asp acts as a targeting signal to indicate that the lipoprotein should stay in the inner membrane). This chain is Outer-membrane lipoprotein carrier protein, found in Pectobacterium atrosepticum (strain SCRI 1043 / ATCC BAA-672) (Erwinia carotovora subsp. atroseptica).